Consider the following 203-residue polypeptide: dITP/XTP pyrophosphatase (203 aa).

Substrate is bound at residue 8-13; sequence TANKGK. 2 residues coordinate Mg(2+): glutamate 41 and aspartate 70. Residue aspartate 70 is the Proton acceptor of the active site. Substrate-binding positions include serine 71, 153-156, lysine 176, and 181-182; these read FGYD and HR.

It belongs to the HAM1 NTPase family. As to quaternary structure, homodimer. Mg(2+) is required as a cofactor.

The catalysed reaction is XTP + H2O = XMP + diphosphate + H(+). The enzyme catalyses dITP + H2O = dIMP + diphosphate + H(+). It catalyses the reaction ITP + H2O = IMP + diphosphate + H(+). Its function is as follows. Pyrophosphatase that catalyzes the hydrolysis of nucleoside triphosphates to their monophosphate derivatives, with a high preference for the non-canonical purine nucleotides XTP (xanthosine triphosphate), dITP (deoxyinosine triphosphate) and ITP. Seems to function as a house-cleaning enzyme that removes non-canonical purine nucleotides from the nucleotide pool, thus preventing their incorporation into DNA/RNA and avoiding chromosomal lesions. The sequence is that of dITP/XTP pyrophosphatase from Listeria innocua serovar 6a (strain ATCC BAA-680 / CLIP 11262).